Here is a 251-residue protein sequence, read N- to C-terminus: Hydroxyacylglutathione hydrolase (251 aa).

Residues H53, H55, D57, H58, H110, D127, and H165 each contribute to the Zn(2+) site.

This sequence belongs to the metallo-beta-lactamase superfamily. Glyoxalase II family. Monomer. The cofactor is Zn(2+).

It catalyses the reaction an S-(2-hydroxyacyl)glutathione + H2O = a 2-hydroxy carboxylate + glutathione + H(+). It participates in secondary metabolite metabolism; methylglyoxal degradation; (R)-lactate from methylglyoxal: step 2/2. In terms of biological role, thiolesterase that catalyzes the hydrolysis of S-D-lactoyl-glutathione to form glutathione and D-lactic acid. The protein is Hydroxyacylglutathione hydrolase of Citrobacter koseri (strain ATCC BAA-895 / CDC 4225-83 / SGSC4696).